A 314-amino-acid chain; its full sequence is Small ribosomal subunit biogenesis GTPase RsgA (314 aa).

The interval 1 to 21 (MKRAPTKQPAKPAARGGERAQ) is disordered. The 162-residue stretch at 85-246 (SDQFKSKLFA…LIDSPGFQEF (162 aa)) folds into the CP-type G domain. Residues 134–137 (NKID) and 188–196 (GQSGMGKST) contribute to the GTP site. The Zn(2+) site is built by C270, C275, H277, and C283.

The protein belongs to the TRAFAC class YlqF/YawG GTPase family. RsgA subfamily. In terms of assembly, monomer. Associates with 30S ribosomal subunit, binds 16S rRNA. Zn(2+) serves as cofactor.

The protein resides in the cytoplasm. One of several proteins that assist in the late maturation steps of the functional core of the 30S ribosomal subunit. Helps release RbfA from mature subunits. May play a role in the assembly of ribosomal proteins into the subunit. Circularly permuted GTPase that catalyzes slow GTP hydrolysis, GTPase activity is stimulated by the 30S ribosomal subunit. In Burkholderia pseudomallei (strain 1710b), this protein is Small ribosomal subunit biogenesis GTPase RsgA.